The following is a 229-amino-acid chain: Protein fmp52-2, mitochondrial (229 aa).

The transit peptide at 1–45 (MTTAAVFGSTGAVGGQILATLLASDAFSSVKTVSRRLPNAQSPKL) directs the protein to the mitochondrion.

The protein belongs to the FMP52 family.

The protein resides in the mitochondrion outer membrane. The chain is Protein fmp52-2, mitochondrial (fmp522) from Aspergillus oryzae (strain ATCC 42149 / RIB 40) (Yellow koji mold).